The sequence spans 140 residues: uncharacterized protein (140 aa).

This is an uncharacterized protein from Saccharomyces cerevisiae (strain ATCC 204508 / S288c) (Baker's yeast).